The chain runs to 207 residues: Ribonuclease HII (207 aa).

The RNase H type-2 domain maps to 12–205 (GLVVGIDEVG…IRNMIEAEAH (194 aa)). 3 residues coordinate a divalent metal cation: D18, E19, and D114.

This sequence belongs to the RNase HII family. It depends on Mn(2+) as a cofactor. Mg(2+) serves as cofactor.

The protein resides in the cytoplasm. The enzyme catalyses Endonucleolytic cleavage to 5'-phosphomonoester.. In terms of biological role, endonuclease that specifically degrades the RNA of RNA-DNA hybrids. In Gluconobacter oxydans (strain 621H) (Gluconobacter suboxydans), this protein is Ribonuclease HII.